Reading from the N-terminus, the 216-residue chain is Ribose-5-phosphate isomerase A (216 aa).

Substrate is bound by residues 26–29, 79–82, and 92–95; these read TGST, DGAD, and KGGG. Residue Glu101 is the Proton acceptor of the active site. Position 119 (Lys119) interacts with substrate.

The protein belongs to the ribose 5-phosphate isomerase family. In terms of assembly, homodimer.

It carries out the reaction aldehydo-D-ribose 5-phosphate = D-ribulose 5-phosphate. The protein operates within carbohydrate degradation; pentose phosphate pathway; D-ribose 5-phosphate from D-ribulose 5-phosphate (non-oxidative stage): step 1/1. Functionally, catalyzes the reversible conversion of ribose-5-phosphate to ribulose 5-phosphate. This is Ribose-5-phosphate isomerase A from Legionella pneumophila (strain Corby).